Here is a 2266-residue protein sequence, read N- to C-terminus: Little elongation complex subunit 1 (2266 aa).

A coiled-coil region spans residues 23 to 186 (CASLQQNLNE…KQKNEKELRH (164 aa)). Disordered regions lie at residues 223–259 (GEGS…PLRT) and 517–540 (PAQE…KRPL). Polar residues predominate over residues 250–259 (PPTQGSPLRT). A phosphoserine mark is found at serine 255, serine 533, serine 558, and serine 589. The interval 591–623 (ELEKEKEDTQGFTLGESPESEDDDSGDGMDVAG) is disordered. A compositionally biased stretch (acidic residues) spans 608 to 617 (PESEDDDSGD). Serine 707 bears the Phosphoserine mark. Threonine 832 is modified (phosphothreonine). The residue at position 925 (serine 925) is a Phosphoserine. Positions 925 to 955 (SPEVSASRRKLDFNSPGGSSPVENSDCSTNS) are disordered. A compositionally biased stretch (polar residues) spans 940 to 955 (PGGSSPVENSDCSTNS). Serine 958 carries the post-translational modification Phosphoserine. Disordered stretches follow at residues 977–1001 (VQGD…HGSE) and 1107–1133 (TEVE…QKNL). Over residues 984-998 (QRQPQATDLDSSGTH) the composition is skewed to polar residues. At lysine 1218 the chain carries N6-acetyllysine. Disordered stretches follow at residues 1295–1372 (TTEN…PSAL), 1467–1510 (AEKS…KSRL), and 1543–1707 (NSKL…SASE). Polar residues-rich tracts occupy residues 1306–1319 (RETT…SEPT), 1328–1344 (EGSS…NPQS), 1487–1505 (NNLS…STNF), 1565–1588 (NKPV…QSFS), and 1594–1605 (TKTQRSQTQTIL). At serine 1588 the chain carries Phosphoserine. 2 stretches are compositionally biased toward low complexity: residues 1609–1620 (DTSTPTDCSPDT) and 1637–1671 (APLI…QVSP). Position 1617 is a phosphoserine (serine 1617). Threonine 1642 is modified (phosphothreonine). Serine 1692, serine 1697, serine 1699, serine 1701, serine 1712, serine 1838, and serine 1854 each carry phosphoserine. The segment at 1809–1902 (TGSSSGGDCN…AVSAVSQLPL (94 aa)) is disordered. The span at 1825 to 1843 (LGTQQDSSGKRTLSTSTLR) shows a compositional bias: polar residues. The segment covering 1889–1901 (CSSPAVSAVSQLP) has biased composition (polar residues). Position 1903 is a phosphoserine (serine 1903).

The protein belongs to the ICE1 family. As to quaternary structure, component of the little elongation complex (LEC), at least composed of ELL (ELL, ELL2 or ELL3), ZC3H8, ICE1 and ICE2. Interacts (via N-terminus domain) with ELL. Interacts (via C-terminus domain) with ICE2 and ZC3H8.

The protein resides in the nucleus. Its subcellular location is the cajal body. In terms of biological role, component of the little elongation complex (LEC), a complex required to regulate small nuclear RNA (snRNA) gene transcription by RNA polymerase II and III. Specifically acts as a scaffold protein that promotes the LEC complex formation and recruitment and RNA polymerase II occupancy at snRNA genes in subnuclear bodies. This is Little elongation complex subunit 1 (ICE1) from Homo sapiens (Human).